A 320-amino-acid chain; its full sequence is Biotin synthase (320 aa).

Residues 45 to 274 (NDLQKASLLS…DSRIRLSAGR (230 aa)) enclose the Radical SAM core domain. [4Fe-4S] cluster contacts are provided by Cys-60, Cys-64, and Cys-67. Residues Cys-105, Cys-137, Cys-197, and Arg-269 each contribute to the [2Fe-2S] cluster site.

The protein belongs to the radical SAM superfamily. Biotin synthase family. As to quaternary structure, homodimer. [4Fe-4S] cluster is required as a cofactor. Requires [2Fe-2S] cluster as cofactor.

It catalyses the reaction (4R,5S)-dethiobiotin + (sulfur carrier)-SH + 2 reduced [2Fe-2S]-[ferredoxin] + 2 S-adenosyl-L-methionine = (sulfur carrier)-H + biotin + 2 5'-deoxyadenosine + 2 L-methionine + 2 oxidized [2Fe-2S]-[ferredoxin]. It functions in the pathway cofactor biosynthesis; biotin biosynthesis; biotin from 7,8-diaminononanoate: step 2/2. Its function is as follows. Catalyzes the conversion of dethiobiotin (DTB) to biotin by the insertion of a sulfur atom into dethiobiotin via a radical-based mechanism. The polypeptide is Biotin synthase (Beijerinckia indica subsp. indica (strain ATCC 9039 / DSM 1715 / NCIMB 8712)).